A 456-amino-acid chain; its full sequence is Myricetin 3-O-rhamnosyltransferase UGT77B2 (456 aa).

The Proton acceptor role is filled by His19. His19 is a binding site for an anthocyanidin. Catalysis depends on Asp116, which acts as the Charge relay. His147 is an an anthocyanidin binding site. UDP-beta-L-rhamnose contacts are provided by Thr279, Ala334, His351, Asn355, and Glu359. Ala374 serves as a coordination point for an anthocyanidin.

This sequence belongs to the UDP-glycosyltransferase family. Expressed in young cromes.

It carries out the reaction myricetin + UDP-beta-L-rhamnose = myricetin 3-O-alpha-L-rhamnoside + UDP + H(+). It participates in flavonoid metabolism. Rhamnosyltransferase involved in montbretin A (MbA) biosynthesis. Catalyzes the 3-O rhamnosylation of myricetin to produce myricetin 3-O-alpha-L-rhamnoside (MR), a precursor of MbA. MbA is a potent inhibitor of human pancreatic alpha-amylase and is being developed as drug candidate to treat type-2 diabetes. In vitro, is able to transfer UDP-glucose and UDP-xylose with 50-fold less efficiency compared with UDP-rhamnose. In vitro, can use kaempferol or quercetin as substrates, although these two flavonols may not be physiological substrates in vivo. This is Myricetin 3-O-rhamnosyltransferase UGT77B2 from Crocosmia x crocosmiiflora (Montbretia).